The chain runs to 284 residues: MVNTSDFKEIIENAWCDIANISTNTSITGVIDEIMDLLDQGKVRVSEKINGQWIVNEWIKKAILLSFRIYDMKFVYTNCHDSIIGNFSWFDKIPLKFGQWNADNFKQAKIRVVPGAIVRKSAYIAPGAVLMPSFVNVGAYVGEGTMVDTWASVGSCAQVGKNCHISGGAGIGGVLEPLTASPVIIEDNCFIGARSEIVEGVIVEEGAVVSMGVYIGASTKIIDRTSGEVFFGRVPAYSVVVPGSYSSGNVSIYCAIIVKKVDQNTRNKVSINELLRDNYAATSI.

Residues R111 and D148 each coordinate substrate.

Belongs to the transferase hexapeptide repeat family. Homotrimer.

The protein localises to the cytoplasm. It carries out the reaction (S)-2,3,4,5-tetrahydrodipicolinate + succinyl-CoA + H2O = (S)-2-succinylamino-6-oxoheptanedioate + CoA. It participates in amino-acid biosynthesis; L-lysine biosynthesis via DAP pathway; LL-2,6-diaminopimelate from (S)-tetrahydrodipicolinate (succinylase route): step 1/3. This Ehrlichia ruminantium (strain Gardel) protein is 2,3,4,5-tetrahydropyridine-2,6-dicarboxylate N-succinyltransferase.